A 491-amino-acid polypeptide reads, in one-letter code: D-xylose-proton symporter (491 aa).

At 1 to 9 (MNTQYNSSY) the chain is on the cytoplasmic side. A helical transmembrane segment spans residues 10–30 (IFSITLVATLGGLLFGYDTAV). Residues 31 to 55 (ISGTVESLNTVFVAPQNLSESAANS) are Periplasmic-facing. A helical transmembrane segment spans residues 56-76 (LLGFCVASALIGCIIGGALGG). Residues 77 to 89 (YCSNRFGRRDSLK) lie on the Cytoplasmic side of the membrane. The helical transmembrane segment at 90 to 110 (IAAVLFFISGVGSAWPELGFT) threads the bilayer. Residues 111–133 (SINPDNTVPVYLAGYVPEFVIYR) lie on the Periplasmic side of the membrane. The chain crosses the membrane as a helical span at residues 134–154 (IIGGIGVGLASMLSPMYIAEL). Over 155–165 (APAHIRGKLVS) the chain is Cytoplasmic. Residues 166 to 186 (FNQFAIIFGQLLVYCVNYFIA) traverse the membrane as a helical segment. Residue glutamine 168 coordinates beta-D-xylose. At 187–200 (RSGDASWLNTDGWR) the chain is on the periplasmic side. Residues 201–221 (YMFASECIPALLFLMLLYTVP) traverse the membrane as a helical segment. The Cytoplasmic segment spans residues 222–272 (ESPRWLMSRGKQEQAEGILRKIMGNTLATQAVQEIKHSLDHGRKTGGRLLM). A helical transmembrane segment spans residues 273–293 (FGVGVIVIGVMLSIFQQFVGI). Beta-D-xylose contacts are provided by residues 288 to 289 (QQ) and asparagine 294. The Periplasmic portion of the chain corresponds to 294–312 (NVVLYYAPEVFKTLGASTD). The helical transmembrane segment at 313–333 (IALLQTIIVGVINLTFTVLAI) threads the bilayer. Residues 334–343 (MTVDKFGRKP) are Cytoplasmic-facing. Residues 344–364 (LQIIGALGMAIGMFSLGTAFY) form a helical membrane-spanning segment. Residues 365 to 369 (TQAPG) lie on the Periplasmic side of the membrane. The helical transmembrane segment at 370 to 390 (IVALLSMLFYVAAFAMSWGPV) threads the bilayer. Residues 391–407 (CWVLLSEIFPNAIRGKA) lie on the Cytoplasmic side of the membrane. Beta-D-xylose-binding residues include tryptophan 392 and glutamine 415. A helical membrane pass occupies residues 408 to 428 (LAIAVAAQWLANYFVSWTFPM). At 429–442 (MDKNSWLVAHFHNG) the chain is on the periplasmic side. A helical membrane pass occupies residues 443–463 (FSYWIYGCMGVLAALFMWKFV). Topologically, residues 464-491 (PETKGKTLEELEALWEPETKKTQQTATL) are cytoplasmic.

Belongs to the major facilitator superfamily. Sugar transporter (TC 2.A.1.1) family.

The protein localises to the cell inner membrane. The catalysed reaction is D-xylose(in) + H(+)(in) = D-xylose(out) + H(+)(out). Uptake of D-xylose across the boundary membrane with the concomitant transport of protons into the cell (symport system). The chain is D-xylose-proton symporter (xylE) from Escherichia coli O157:H7.